A 249-amino-acid polypeptide reads, in one-letter code: MILGYVNNTYFNQAPNFSSNFNFQFQKRLTKEDIYFIVPDYLIPDDCLQIHKLYDNCMSGNFVVMQNKPIQYNSDIEIIEHYTDELAEVALSRFSLIMQAKFSKIFKSEINDESINQLVSEIYNGAPFVKMSPMFNADDDIIDLTSNSVIPALTEMKREYQNKISELSNYLGINSLAVDKESGVSDEEAKSNRGFTTSNSNIYLKGREPITFLSKRYGLDIKPYYDDETTSKISMVDTLFKDESSDING.

The protein belongs to the phi29likevirus portal protein family. Homododecamer. Interacts with the pRNA.

The protein localises to the virion. In terms of biological role, forms the portal vertex of the capsid. This portal plays critical roles in head assembly, genome packaging, neck/tail attachment, and genome ejection. The portal protein multimerizes as a single ring-shaped homododecamer arranged around a central channel. Binds to the 6 packaging RNA molecules (pRNA) forming a double-ring structure which in turn binds to the ATPase gp16 hexamer, forming the active DNA-translocating motor. This complex is essential for the specificity of packaging from the left DNA end. This Staphylococcus phage 44AHJD protein is Portal protein.